We begin with the raw amino-acid sequence, 262 residues long: Hemin import ATP-binding protein HmuV (262 aa).

One can recognise an ABC transporter domain in the interval 3-244 (LQARNLTLAR…DHMRRVYGIE (242 aa)). Residue 35–42 (GANGAGKS) coordinates ATP.

This sequence belongs to the ABC transporter superfamily. Heme (hemin) importer (TC 3.A.1.14.5) family. In terms of assembly, the complex is composed of two ATP-binding proteins (HmuV), two transmembrane proteins (HmuU) and a solute-binding protein (HmuT).

The protein localises to the cell inner membrane. Part of the ABC transporter complex HmuTUV involved in hemin import. Responsible for energy coupling to the transport system. In Bordetella pertussis (strain Tohama I / ATCC BAA-589 / NCTC 13251), this protein is Hemin import ATP-binding protein HmuV.